The chain runs to 450 residues: Molybdate-anion transporter (450 aa).

The next 12 helical transmembrane spans lie at 1–21 (MLVTAYLAFVGLLASCLGLEL), 43–63 (LDFYQVYFLALAADWLQAPYL), 79–99 (ILYVCGLASTVLFGLVASSLV), 128–148 (FVLLVGRALGGLSTALLFSAF), 174–194 (AAFWNHVLAVVAGVAAEAVAS), 195–215 (WIGLGPVAPFVAAIPLLALAG), 249–269 (VLLLGTIQALFESVIFIFVFL), 278–298 (GAPLGIIFSSFMAASLLGSSL), 311–331 (PMHLLSLAVLIVVFSLFMLTF), 344–364 (FIAFLLIELACGLYFPSMSFL), 376–396 (GVLNWFRVPLHSLACLGLLVL), and 409–429 (FSICSAVMVMALLAVVGLFTV).

This sequence belongs to the major facilitator superfamily. In terms of tissue distribution, expressed ubiquitously but at relatively higher levels in the olfactory bulb and the skeletal muscle.

It is found in the cell membrane. Its function is as follows. Mediates high-affinity intracellular uptake of the rare oligo-element molybdenum. The protein is Molybdate-anion transporter (MFSD5) of Homo sapiens (Human).